The sequence spans 401 residues: Nodal homolog 3-B (401 aa).

The N-terminal stretch at 1–18 (MAFLSLFLCLVFSSPLMA) is a signal peptide. Positions 19–274 (MPPALQGRKA…KVNGFRRLRR (256 aa)) are excised as a propeptide. 3 N-linked (GlcNAc...) asparagine glycosylation sites follow: Asn-168, Asn-337, and Asn-344. Intrachain disulfides connect Cys-299-Cys-365 and Cys-328-Cys-396.

The protein belongs to the TGF-beta family. Monomer. The propeptide region interacts with bmp4 in a non-covalent manner. Expressed in the dorsal marginal region of late blastula, becoming restricted to the Spemann organizer at the early gastrula stage.

Its subcellular location is the secreted. In terms of biological role, exhibits mesoderm-dorsalizing activity and neural-inducing activity, but lacks mesoderm-inducing activity. Regulates the expression of specific mesodermal and neural genes. Induces convergent extension movements at the embryonic midline by activating the fgf signaling pathway to induce t/bra expression in the organizer region. Acts with wnt11 to induce Spemann organizer cells and induce axis formation. The unprocessed protein antagonizes bmp-signaling. This Xenopus tropicalis (Western clawed frog) protein is Nodal homolog 3-B.